The following is a 254-amino-acid chain: tRNA pseudouridine synthase A (254 aa).

Aspartate 52 functions as the Nucleophile in the catalytic mechanism. Residue tyrosine 110 participates in substrate binding.

The protein belongs to the tRNA pseudouridine synthase TruA family. As to quaternary structure, homodimer.

It catalyses the reaction uridine(38/39/40) in tRNA = pseudouridine(38/39/40) in tRNA. Formation of pseudouridine at positions 38, 39 and 40 in the anticodon stem and loop of transfer RNAs. This Thermodesulfovibrio yellowstonii (strain ATCC 51303 / DSM 11347 / YP87) protein is tRNA pseudouridine synthase A.